The following is a 585-amino-acid chain: Pyruvate kinase (585 aa).

Arg32 serves as a coordination point for substrate. Residues Asn34, Ser36, Asp66, and Thr67 each contribute to the K(+) site. Residue 34–37 participates in ATP binding; sequence NFSH. ATP contacts are provided by Arg73 and Lys156. Mg(2+) is bound at residue Glu221. 3 residues coordinate substrate: Gly244, Asp245, and Thr277. Asp245 is a binding site for Mg(2+).

The protein belongs to the pyruvate kinase family. In the C-terminal section; belongs to the PEP-utilizing enzyme family. Mg(2+) is required as a cofactor. K(+) serves as cofactor.

The catalysed reaction is pyruvate + ATP = phosphoenolpyruvate + ADP + H(+). It participates in carbohydrate degradation; glycolysis; pyruvate from D-glyceraldehyde 3-phosphate: step 5/5. The polypeptide is Pyruvate kinase (pyk) (Staphylococcus aureus (strain bovine RF122 / ET3-1)).